Consider the following 659-residue polypeptide: UvrABC system protein B (659 aa).

Residues 27–414 (EGLEQNKKSQ…AHGEIVKQII (388 aa)) form the Helicase ATP-binding domain. 40–47 (GVTGSGKT) lines the ATP pocket. Positions 93–116 (YFDYYRPEAYMPNTDTYIDKTTKS) match the Beta-hairpin motif. A Helicase C-terminal domain is found at 432-594 (QVEDMFDEIQ…IIPKTIIKPI (163 aa)). A UVR domain is found at 624 to 659 (EALVKDLRNQMLDASKQLNFERAAELRDIILELEAN).

Belongs to the UvrB family. In terms of assembly, forms a heterotetramer with UvrA during the search for lesions. Interacts with UvrC in an incision complex.

It is found in the cytoplasm. The UvrABC repair system catalyzes the recognition and processing of DNA lesions. A damage recognition complex composed of 2 UvrA and 2 UvrB subunits scans DNA for abnormalities. Upon binding of the UvrA(2)B(2) complex to a putative damaged site, the DNA wraps around one UvrB monomer. DNA wrap is dependent on ATP binding by UvrB and probably causes local melting of the DNA helix, facilitating insertion of UvrB beta-hairpin between the DNA strands. Then UvrB probes one DNA strand for the presence of a lesion. If a lesion is found the UvrA subunits dissociate and the UvrB-DNA preincision complex is formed. This complex is subsequently bound by UvrC and the second UvrB is released. If no lesion is found, the DNA wraps around the other UvrB subunit that will check the other stand for damage. The polypeptide is UvrABC system protein B (Mycoplasma mobile (strain ATCC 43663 / 163K / NCTC 11711) (Mesomycoplasma mobile)).